Reading from the N-terminus, the 89-residue chain is U-scoloptoxin(12)-Er1a (89 aa).

The signal sequence occupies residues Met1–Thr22.

This sequence belongs to the scoloptoxin-12 family. Contains 3 disulfide bonds. Expressed by the venom gland.

Its subcellular location is the secreted. In Ethmostigmus rubripes (Giant centipede), this protein is U-scoloptoxin(12)-Er1a.